The following is a 574-amino-acid chain: Putative ABC transporter ATP-binding protein VV2_1533 (574 aa).

ABC transporter domains follow at residues 3–244 and 299–533; these read IEFS…GIRE and LDVR…ANLT. Residues 37–44 and 332–339 contribute to the ATP site; these read GPSGSGKS and GKNGSGKS.

The protein belongs to the ABC transporter superfamily.

The protein localises to the cell inner membrane. Its function is as follows. Probably part of an ABC transporter complex. Responsible for energy coupling to the transport system. This is Putative ABC transporter ATP-binding protein VV2_1533 from Vibrio vulnificus (strain CMCP6).